The sequence spans 151 residues: Small ribosomal subunit protein uS15 (151 aa).

The residue at position 32 (Ser-32) is a Phosphoserine. Residues Lys-39 and Lys-43 each participate in a glycyl lysine isopeptide (Lys-Gly) (interchain with G-Cter in ubiquitin) cross-link.

The protein belongs to the universal ribosomal protein uS15 family. As to quaternary structure, component of the small ribosomal subunit (SSU). Mature yeast ribosomes consist of a small (40S) and a large (60S) subunit. The 40S small subunit contains 1 molecule of ribosomal RNA (18S rRNA) and 33 different proteins (encoded by 57 genes). The large 60S subunit contains 3 rRNA molecules (25S, 5.8S and 5S rRNA) and 46 different proteins (encoded by 81 genes).

The protein resides in the cytoplasm. Its function is as follows. Component of the ribosome, a large ribonucleoprotein complex responsible for the synthesis of proteins in the cell. The small ribosomal subunit (SSU) binds messenger RNAs (mRNAs) and translates the encoded message by selecting cognate aminoacyl-transfer RNA (tRNA) molecules. The large subunit (LSU) contains the ribosomal catalytic site termed the peptidyl transferase center (PTC), which catalyzes the formation of peptide bonds, thereby polymerizing the amino acids delivered by tRNAs into a polypeptide chain. The nascent polypeptides leave the ribosome through a tunnel in the LSU and interact with protein factors that function in enzymatic processing, targeting, and the membrane insertion of nascent chains at the exit of the ribosomal tunnel. This Saccharomyces cerevisiae (strain ATCC 204508 / S288c) (Baker's yeast) protein is Small ribosomal subunit protein uS15.